Consider the following 240-residue polypeptide: Acyl-coenzyme A thioesterase THEM4 (240 aa).

The transit peptide at 1–36 (MLRSCAARLRTLGALCLPPVGRRLPGSEPRPELRSF) directs the protein to the mitochondrion. Residues Ser-37 and Ser-38 each carry the phosphoserine modification. N6-succinyllysine is present on residues Lys-55 and Lys-66. N6-acetyllysine is present on Lys-74. Residue Lys-98 is modified to N6-succinyllysine. The Proton donor/acceptor role is filled by Asp-161. Residues Asn-183, Lys-185, and 206–207 (RK) contribute to the substrate site. The residue at position 207 (Lys-207) is an N6-succinyllysine.

The protein belongs to the THEM4/THEM5 thioesterase family. As to quaternary structure, homodimer and homotetramer. Interacts with AKT1 in the cytosol. Phosphorylated. Expressed predominantly in skeletal muscle, testis, uterus, brain and kidney. Down-regulated in glioblastoma or glioma compared to non-neoplastic brain due to promoter hypermethylation.

The protein localises to the cell membrane. It localises to the cell projection. Its subcellular location is the ruffle membrane. It is found in the cytoplasm. The protein resides in the mitochondrion. The protein localises to the mitochondrion inner membrane. It localises to the mitochondrion intermembrane space. The catalysed reaction is hexadecanoyl-CoA + H2O = hexadecanoate + CoA + H(+). It catalyses the reaction octanoyl-CoA + H2O = octanoate + CoA + H(+). It carries out the reaction decanoyl-CoA + H2O = decanoate + CoA + H(+). The enzyme catalyses dodecanoyl-CoA + H2O = dodecanoate + CoA + H(+). The catalysed reaction is tetradecanoyl-CoA + H2O = tetradecanoate + CoA + H(+). It catalyses the reaction (9Z)-octadecenoyl-CoA + H2O = (9Z)-octadecenoate + CoA + H(+). It carries out the reaction (5Z,8Z,11Z,14Z)-eicosatetraenoyl-CoA + H2O = (5Z,8Z,11Z,14Z)-eicosatetraenoate + CoA + H(+). Its function is as follows. Has acyl-CoA thioesterase activity towards medium and long-chain (C14 to C18) fatty acyl-CoA substrates, and probably plays a role in mitochondrial fatty acid metabolism. Plays a role in the apoptotic process, possibly via its regulation of AKT1 activity. According to PubMed:11598301, inhibits AKT1 phosphorylation and activity. According to PubMed:17615157, enhances AKT1 activity by favoring its phosphorylation and translocation to plasma membrane. The polypeptide is Acyl-coenzyme A thioesterase THEM4 (THEM4) (Homo sapiens (Human)).